A 252-amino-acid polypeptide reads, in one-letter code: Hydroxyacylglutathione hydrolase (252 aa).

Histidine 54, histidine 56, aspartate 58, histidine 59, histidine 111, aspartate 128, and histidine 166 together coordinate Zn(2+).

This sequence belongs to the metallo-beta-lactamase superfamily. Glyoxalase II family. As to quaternary structure, monomer. Zn(2+) is required as a cofactor.

The enzyme catalyses an S-(2-hydroxyacyl)glutathione + H2O = a 2-hydroxy carboxylate + glutathione + H(+). The protein operates within secondary metabolite metabolism; methylglyoxal degradation; (R)-lactate from methylglyoxal: step 2/2. Functionally, thiolesterase that catalyzes the hydrolysis of S-D-lactoyl-glutathione to form glutathione and D-lactic acid. This is Hydroxyacylglutathione hydrolase from Aliivibrio fischeri (strain ATCC 700601 / ES114) (Vibrio fischeri).